The primary structure comprises 349 residues: MATATLTIDLDAIAANWRALDQMTASDCQTGAVVKADAYGLGAAKVAHALARAGARRFFVAACEEGAEVRRALGSGPQICVFSGHMEGDTALIRDFDLTPMLNSIEQLTRHFETLGGQPFGLQLDSGMNRLGLEPGEWEAVAATALEAGPELLMSHLACADEPDHPMNTEQLRAFRAMTDGTGVPRSLSATGGILLGPAWHFELTRPGIGLYGGRPFEEARPVVHLSLPVVQVREVEIGEPVGYSNSWTAEHTSTIATVAAGYADGLPRTLSSRASLFAGRVPCPLVGRVSMDLITVDVSHLPEVPDALDILCRHQTPDDLADTAGTIGYEILTSLGRRYQRRYGALAA.

Residue Lys35 is the Proton acceptor; specific for D-alanine of the active site. An N6-(pyridoxal phosphate)lysine modification is found at Lys35. Position 130 (Arg130) interacts with substrate. Tyr244 acts as the Proton acceptor; specific for L-alanine in catalysis. Met292 provides a ligand contact to substrate.

Belongs to the alanine racemase family. Pyridoxal 5'-phosphate is required as a cofactor.

The enzyme catalyses L-alanine = D-alanine. The protein operates within amino-acid biosynthesis; D-alanine biosynthesis; D-alanine from L-alanine: step 1/1. Catalyzes the interconversion of L-alanine and D-alanine. May also act on other amino acids. The polypeptide is Alanine racemase (alr) (Cereibacter sphaeroides (strain ATCC 17025 / ATH 2.4.3) (Rhodobacter sphaeroides)).